The sequence spans 238 residues: 14-3-3 family protein artA (238 aa).

It belongs to the 14-3-3 family.

14-3-3 family protein that plays a role in the morphological differentiation and secondary metabolism biosynthesis. Required for normal fungal morphogenesis in an environment-dependent manner, affecting the balance between production of conidiophores and the formation of sclerotia, resistant structures that are necessary for the dissemination and survival. Acts as a positive regulator of conidiation and a negative regulator of sclerotial production. Also regulates the production of secondary metabolites such as aflatoxin, but also the indole-tetramic acid mycotoxin cyclopiazonic acid (CPA) and ustiloxin, an inhibitor of microtubule assembly. The chain is 14-3-3 family protein artA from Aspergillus flavus (strain ATCC 200026 / FGSC A1120 / IAM 13836 / NRRL 3357 / JCM 12722 / SRRC 167).